A 316-amino-acid chain; its full sequence is UDP-N-acetyl-2-amino-2-deoxy-D-glucuronate oxidase (316 aa).

Residues 11 to 13 (GYI), 32 to 37 (YDINDS), E55, 81 to 84 (NYLH), 101 to 102 (EK), Q130, and 171 to 172 (WK) each bind NAD(+).

It belongs to the Gfo/Idh/MocA family. Homotetramer.

It catalyses the reaction UDP-2-acetamido-2-deoxy-alpha-D-glucuronate + NAD(+) = UDP-2-acetamido-2-deoxy-alpha-D-ribo-hex-3-uluronate + NADH + H(+). It carries out the reaction 2-hydroxyglutarate + NAD(+) = 2-oxoglutarate + NADH + H(+). The protein operates within bacterial outer membrane biogenesis; LPS O-antigen biosynthesis. Its function is as follows. Plays a role in the biosynthesis of B-band O antigen for serotype O5. Catalyzes the NAD-dependent oxidation of UDP-N-acetylglucosaminuronic acid (UDP-D-GlcNAcA) to UDP-2-acetamido-2-deoxy-3-oxo-D-glucuronic acid (UDP-3-oxo-D-GlcNAcA). Cannot use UDP-GlcNAc or UDP-GalNAc as the nucleotide sugar substrate, and can use only poorly UDP-D-glucuronic acid (UDP-GlcA). Undergoes an NAD(+) recycling mechanism using 2-oxoglutarate as an oxidant. The sequence is that of UDP-N-acetyl-2-amino-2-deoxy-D-glucuronate oxidase from Pseudomonas aeruginosa (strain ATCC 15692 / DSM 22644 / CIP 104116 / JCM 14847 / LMG 12228 / 1C / PRS 101 / PAO1).